A 109-amino-acid polypeptide reads, in one-letter code: Nucleoid-associated protein MADE_1013280 (109 aa).

Residues Thr86–Phe109 form a disordered region. A compositionally biased stretch (pro residues) spans Pro99–Phe109.

The protein belongs to the YbaB/EbfC family. As to quaternary structure, homodimer.

It is found in the cytoplasm. It localises to the nucleoid. Its function is as follows. Binds to DNA and alters its conformation. May be involved in regulation of gene expression, nucleoid organization and DNA protection. The protein is Nucleoid-associated protein MADE_1013280 of Alteromonas mediterranea (strain DSM 17117 / CIP 110805 / LMG 28347 / Deep ecotype).